The following is a 229-amino-acid chain: GTP cyclohydrolase 1 (229 aa).

The segment at 1–31 is disordered; the sequence is MFRESDNTIAPSNQDLNKPVVDKEQPAERTP. Over residues 7–16 the composition is skewed to polar residues; it reads NTIAPSNQDL. Cys117, His120, and Cys188 together coordinate Zn(2+).

Belongs to the GTP cyclohydrolase I family. Toroid-shaped homodecamer, composed of two pentamers of five dimers.

The enzyme catalyses GTP + H2O = 7,8-dihydroneopterin 3'-triphosphate + formate + H(+). Its pathway is cofactor biosynthesis; 7,8-dihydroneopterin triphosphate biosynthesis; 7,8-dihydroneopterin triphosphate from GTP: step 1/1. This chain is GTP cyclohydrolase 1, found in Rhodopirellula baltica (strain DSM 10527 / NCIMB 13988 / SH1).